The chain runs to 467 residues: MLKSAVYSILAASLVNAGTIPLGKLSDIDKIGTQTEIFPFLGGSGPYYSFPGDYGISRDLPESCEMKQVQMVGRHGERYPTVSKAKSIMTTWYKLSNYTGQFSGALSFLNDDYEFFIRDTKNLEMETTLANSVNVLNPYTGEMNAKRHARDFLAQYGYMVENQTSFAVFTSNSNRCHDTAQYFIDGLGDKFNISLQTISEAESAGANTLSAHHSCPAWDDDVNDDILKKYDTKYLSGIAKRLNKENKGLNLTSSDANTFFAWCAYEINARGYSDICNIFTKDELVRFSYGQDLETYYQTGPGYDVVRSVGANLFNASVKLLKESEVQDQKVWLSFTHDTDILNYLTTIGIIDDQNNLTAEHVPFMENTFHRSWYVPQGARVYTEKFQCSNDTYVRYVINDAVVPIETCSTGPGFSCEINDFYGYAEKRVAGTDFLKVCNVSSVSNSTELTFFWDWNTKHYNDTLLKQ.

The first 17 residues, 1–17 (MLKSAVYSILAASLVNA), serve as a signal peptide directing secretion. His75 acts as the Nucleophile in catalysis. Asn97, Asn162, Asn192, Asn250, and Asn315 each carry an N-linked (GlcNAc...) asparagine glycan. The active-site Proton donor is the Asp338. N-linked (GlcNAc...) asparagine glycosylation is found at Asn356, Asn390, Asn439, Asn445, and Asn461.

It belongs to the histidine acid phosphatase family. Post-translationally, glycosylated during secretion across the membrane.

The enzyme catalyses a phosphate monoester + H2O = an alcohol + phosphate. The polypeptide is Acid phosphatase PHO12 (PHO12) (Saccharomyces cerevisiae (strain ATCC 204508 / S288c) (Baker's yeast)).